The following is a 126-amino-acid chain: Fluoride-specific ion channel FluC 1 (126 aa).

4 helical membrane passes run 1–21 (MAGS…GAWL), 38–58 (WGTF…LALY), 67–87 (LALL…TFAV), and 99–119 (FVSL…AGVG). Positions 77 and 80 each coordinate Na(+).

It belongs to the fluoride channel Fluc/FEX (TC 1.A.43) family.

The protein resides in the cell inner membrane. The enzyme catalyses fluoride(in) = fluoride(out). With respect to regulation, na(+) is not transported, but it plays an essential structural role and its presence is essential for fluoride channel function. In terms of biological role, fluoride-specific ion channel. Important for reducing fluoride concentration in the cell, thus reducing its toxicity. This Synechococcus sp. (strain CC9902) protein is Fluoride-specific ion channel FluC 1.